The primary structure comprises 444 residues: MAERKYFGTDGVRGKVGQFPITPDFALKLGWAAGKILATQGTKQVLIGKDTRISGYMLESALEAGLAAAGLSAAFVGPMPTPAVAYLTRTFRAEAGIVISASHNPYYDNGIKFFSANGEKLPDEVEEAIEALLDQPMDYVESDQLGKAIRINDAAGRYIEFCKGTFPADASLKGYKIVVDCAHGATYHIAPNVMRELGAEVIEIGTHPNGLNINDKCGATDISALQQAVLTSKADLGVAYDGDGDRIIMVDHLGNKVDGDQILFIIAREALRSGKLKGGVVGTLMSNMGLEIALKHLAIPFTRANVGDRYVLEQLKEKNWKLGGENSGHIIVLDKNTTGDGIIASLEVLAAMEAHKMSLNDLTHAVPLFPQVLLNVRFDGGNNPLENAAVKALAKDIETRLVGKGRILLRKSGTEPLIRVMVECEDAVLAQQYAEEIVSAIQNH.

Residue Ser-102 is the Phosphoserine intermediate of the active site. Positions 102, 241, 243, and 245 each coordinate Mg(2+). Ser-102 carries the post-translational modification Phosphoserine.

This sequence belongs to the phosphohexose mutase family. Mg(2+) is required as a cofactor. Activated by phosphorylation.

It catalyses the reaction alpha-D-glucosamine 1-phosphate = D-glucosamine 6-phosphate. In terms of biological role, catalyzes the conversion of glucosamine-6-phosphate to glucosamine-1-phosphate. The protein is Phosphoglucosamine mutase of Haemophilus ducreyi (strain 35000HP / ATCC 700724).